A 219-amino-acid chain; its full sequence is Elongation factor Ts (219 aa).

Residues 82 to 85 (TDFV) are involved in Mg(2+) ion dislocation from EF-Tu.

Belongs to the EF-Ts family.

Its subcellular location is the cytoplasm. Its function is as follows. Associates with the EF-Tu.GDP complex and induces the exchange of GDP to GTP. It remains bound to the aminoacyl-tRNA.EF-Tu.GTP complex up to the GTP hydrolysis stage on the ribosome. The polypeptide is Elongation factor Ts (Gloeobacter violaceus (strain ATCC 29082 / PCC 7421)).